A 353-amino-acid polypeptide reads, in one-letter code: Rhodopsin (353 aa).

Over 1–36 the chain is Extracellular; sequence MNGTEGPYFYVPMVNTSGIVRSPYEYPQYYLVNPAA. 2 N-linked (GlcNAc...) asparagine glycosylation sites follow: Asn-2 and Asn-15. Residues 37 to 61 form a helical membrane-spanning segment; sequence YARLGAYMFLLILVGFPINFLTLYV. Residues 62–73 are Cytoplasmic-facing; sequence TIEHKKLRTPLN. The chain crosses the membrane as a helical span at residues 74–96; the sequence is YILLNLAVADLFMVFGGFTTTMY. Residues 97–110 lie on the Extracellular side of the membrane; sequence TSMHGYFVLGRLGC. Cys-110 and Cys-187 are oxidised to a cystine. A helical membrane pass occupies residues 111–133; it reads NIEGFFATLGGEIALWSLVVLAI. Residues 134–136 carry the 'Ionic lock' involved in activated form stabilization motif; the sequence is ERW. The Cytoplasmic portion of the chain corresponds to 134–152; it reads ERWVVVCKPISNFRFGENH. The chain crosses the membrane as a helical span at residues 153 to 173; that stretch reads AIMGLAFTWLMALACAAPPLV. Over 174 to 202 the chain is Extracellular; the sequence is GWSRYIPEGMQCSCGIDYYTRAEGFNNES. N-linked (GlcNAc...) asparagine glycosylation occurs at Asn-200. The helical transmembrane segment at 203–224 threads the bilayer; that stretch reads FVIYMFVCHFTVPLMVVFFCYG. At 225–252 the chain is on the cytoplasmic side; that stretch reads RLLCAVKEAAAAQQESETTQRAEREVTR. A helical membrane pass occupies residues 253 to 274; the sequence is MVIMMVVAFLVCWLPYASVAWW. Residues 275–286 are Extracellular-facing; that stretch reads IFTHQGSEFGPV. Residues 287 to 308 traverse the membrane as a helical segment; the sequence is FMTIPAFFAKSSSIYNPMIYIC. Lys-296 carries the N6-(retinylidene)lysine modification. At 309-353 the chain is on the cytoplasmic side; sequence LNKQFRHCMITTLCCGKNPFEEEEGASTASKTEASSVSSSSVSPA. Residues Cys-322 and Cys-323 are each lipidated (S-palmitoyl cysteine). Residues 331–353 form a disordered region; the sequence is EEGASTASKTEASSVSSSSVSPA. A compositionally biased stretch (low complexity) spans 334–353; the sequence is ASTASKTEASSVSSSSVSPA.

This sequence belongs to the G-protein coupled receptor 1 family. Opsin subfamily. Phosphorylated on some or all of the serine and threonine residues present in the C-terminal region. Post-translationally, contains one covalently linked retinal chromophore.

Its subcellular location is the membrane. The protein resides in the cell projection. It is found in the cilium. The protein localises to the photoreceptor outer segment. Its function is as follows. Photoreceptor required for image-forming vision at low light intensity. While most salt water fish species use retinal as chromophore, most freshwater fish use 3-dehydroretinal, or a mixture of retinal and 3-dehydroretinal. Light-induced isomerization of 11-cis to all-trans retinal triggers a conformational change that activates signaling via G-proteins. Subsequent receptor phosphorylation mediates displacement of the bound G-protein alpha subunit by arrestin and terminates signaling. The sequence is that of Rhodopsin (rho) from Sarpa salpa (Salema).